Consider the following 428-residue polypeptide: 3-phosphoshikimate 1-carboxyvinyltransferase (428 aa).

Positions 21, 22, and 26 each coordinate 3-phosphoshikimate. Lys-21 provides a ligand contact to phosphoenolpyruvate. 2 residues coordinate phosphoenolpyruvate: Gly-94 and Arg-122. The 3-phosphoshikimate site is built by Ser-166, Ser-167, Gln-168, Ser-194, Asp-306, and Lys-333. A phosphoenolpyruvate-binding site is contributed by Gln-168. Catalysis depends on Asp-306, which acts as the Proton acceptor. Positions 337, 379, and 405 each coordinate phosphoenolpyruvate.

The protein belongs to the EPSP synthase family. In terms of assembly, monomer.

The protein resides in the cytoplasm. It catalyses the reaction 3-phosphoshikimate + phosphoenolpyruvate = 5-O-(1-carboxyvinyl)-3-phosphoshikimate + phosphate. Its pathway is metabolic intermediate biosynthesis; chorismate biosynthesis; chorismate from D-erythrose 4-phosphate and phosphoenolpyruvate: step 6/7. Catalyzes the transfer of the enolpyruvyl moiety of phosphoenolpyruvate (PEP) to the 5-hydroxyl of shikimate-3-phosphate (S3P) to produce enolpyruvyl shikimate-3-phosphate and inorganic phosphate. This chain is 3-phosphoshikimate 1-carboxyvinyltransferase, found in Clostridium acetobutylicum (strain ATCC 824 / DSM 792 / JCM 1419 / IAM 19013 / LMG 5710 / NBRC 13948 / NRRL B-527 / VKM B-1787 / 2291 / W).